Here is a 64-residue protein sequence, read N- to C-terminus: MHCLPVLVILLLLIASTPSVDARPKTKDDVPLASFHGADNANRILRTLWNLRGCCEDKTCCFIG.

An N-terminal signal peptide occupies residues Met-1–Ala-22. The propeptide occupies Arg-23–Leu-51. Residue Ile-63 is modified to Isoleucine amide.

Belongs to the conotoxin T superfamily. Post-translationally, contains 2 disulfide bonds that can be either 'C1-C3, C2-C4' or 'C1-C4, C2-C3', since these disulfide connectivities have been observed for conotoxins with cysteine framework V (for examples, see AC P0DQQ7 and AC P81755). As to expression, expressed by the venom duct.

Its subcellular location is the secreted. The polypeptide is Conotoxin Ts-011 (Conus tessulatus (Tessellate cone)).